A 1186-amino-acid chain; its full sequence is Trafficking protein particle complex II-specific subunit 120 homolog (1186 aa).

Disordered stretches follow at residues 777–824 (PTDS…EKES) and 964–984 (TKDP…SEKN). The span at 779–792 (DSDNTMSSGRNAAG) shows a compositional bias: polar residues. Ser971 bears the Phosphoserine mark. A compositionally biased stretch (low complexity) spans 972 to 981 (PSSSRNPSFS).

The protein belongs to the TRS120 family. Part of the multisubunit TRAPP (transport protein particle) II complex composed of BET3, BET5, TRS20, TRS23, TRS31, TRS33, TRS65, TRS85, TRS120 and TRS130. Expressed in roots, leaves, stems and flowers.

It is found in the golgi apparatus. The protein localises to the trans-Golgi network. The protein resides in the early endosome. Functionally, specific subunit of the TRAPP II complex, a highly conserved vesicle tethering complex that is required for the proper transport of proteins in post-Golgi trafficking pathways to the growing cell plate in mitotic active cells. Required for the polarized and selective transport of PIN2 and probably PIN1 to the plasma membrane. Not required for ER-to-Golgi as well as biosynthetic and endocytic vacuolar transport. This is Trafficking protein particle complex II-specific subunit 120 homolog from Arabidopsis thaliana (Mouse-ear cress).